A 576-amino-acid chain; its full sequence is MPALATGSACDMGLYELLAALPAQLQPHVDSQEDLTFLWDVFGEKSLHSLVKIHEKLHCYEKQNPLPILHGAAALADDLTEELQNKLPNSEIRELLKLLSKPNVKALLSVHDTVAQKSYDPVLPPVPDDIDDEEDSVKIIRLVKNSEPLGATIKKDEQTGAITVARIMRGGAADRSGLIHVGDELREVNGIPVEDKRPEEIIKILSQSKGAITFKIIPSTKEETPSKEGKIFIKALFDYDPKEDKAIPCKEAGLSFRKGDILQIMSQDDVTWWQAKHEGDANPRAGLIPSKHFQERRLALRRPEIVVQPLKLSNTKSSGFRRSFRLSRKNKKINKSMYECKKSEQYDTADVPTYEEVTPYRRQIHDKYRLIVLVGPVGVGLNELKRKLLMSDAQHYGVIVPHTTRARRSQESDGVEYIFISKHLFETDVQINKFIEYGEYKNNYYGTSIDSVRSVLAKNKVCLLDVQPHTVKHLRTLEFKPYVIFIKPPSIERLRETRKNAKIISSRDDQGTAKPFTEEDFQEMIKSAQIMESQYGHLFDKIIINDDLTVAFNELKTTFDKLETDTHWVPVSWLHS.

L27 domains are found at residues 10 to 64 and 65 to 122; these read CDMG…EKQN and PLPI…YDPV. In terms of domain architecture, PDZ spans 139–220; sequence IIRLVKNSEP…AITFKIIPST (82 aa). Residues 228-298 form the SH3 domain; it reads EGKIFIKALF…PSKHFQERRL (71 aa). Residues 289 to 383 are phospho-regulated basic and hydrophobic (PRBH) motif; it reads PSKHFQERRL…VGPVGVGLNE (95 aa). The region spanning 368 to 560 is the Guanylate kinase-like domain; that stretch reads YRLIVLVGPV…AFNELKTTFD (193 aa). S409 is modified (phosphoserine).

It belongs to the MAGUK family. In terms of assembly, heterodimer; able to heterodimerize via its C-terminal L27 domain with LIN7A, LIN7B and LIN7C. Forms a tripartite complex composed of DLG1, MPP7 and LIN7 (LIN7A or LIN7C). Interacts with DLG1 via its N-terminal L27 domain. Interacts with PALS1 and PATJ. Phosphorylated by aPKC which promotes dissociation from the cell cortex.

The protein localises to the membrane. Its subcellular location is the lateral cell membrane. It is found in the cell junction. The protein resides in the tight junction. It localises to the adherens junction. The protein localises to the cytoplasm. Its subcellular location is the cell cortex. In terms of biological role, acts as an important adapter that promotes epithelial cell polarity and tight junction formation via its interaction with DLG1. Involved in the assembly of protein complexes at sites of cell-cell contact. This Mus musculus (Mouse) protein is MAGUK p55 subfamily member 7 (Mpp7).